The primary structure comprises 377 residues: Methylthioribose-1-phosphate isomerase (377 aa).

Residue aspartate 254 is the Proton donor of the active site.

The protein belongs to the eIF-2B alpha/beta/delta subunits family. MtnA subfamily.

It is found in the cytoplasm. Its subcellular location is the nucleus. It carries out the reaction 5-(methylsulfanyl)-alpha-D-ribose 1-phosphate = 5-(methylsulfanyl)-D-ribulose 1-phosphate. It participates in amino-acid biosynthesis; L-methionine biosynthesis via salvage pathway; L-methionine from S-methyl-5-thio-alpha-D-ribose 1-phosphate: step 1/6. Catalyzes the interconversion of methylthioribose-1-phosphate (MTR-1-P) into methylthioribulose-1-phosphate (MTRu-1-P). The polypeptide is Methylthioribose-1-phosphate isomerase (mri1) (Aspergillus terreus (strain NIH 2624 / FGSC A1156)).